An 892-amino-acid chain; its full sequence is Alanine--tRNA ligase (892 aa).

Zn(2+) is bound by residues His-574, His-578, Cys-677, and His-681.

This sequence belongs to the class-II aminoacyl-tRNA synthetase family. The cofactor is Zn(2+).

Its subcellular location is the cytoplasm. It carries out the reaction tRNA(Ala) + L-alanine + ATP = L-alanyl-tRNA(Ala) + AMP + diphosphate. Functionally, catalyzes the attachment of alanine to tRNA(Ala) in a two-step reaction: alanine is first activated by ATP to form Ala-AMP and then transferred to the acceptor end of tRNA(Ala). Also edits incorrectly charged Ser-tRNA(Ala) and Gly-tRNA(Ala) via its editing domain. The polypeptide is Alanine--tRNA ligase (Mesoplasma florum (strain ATCC 33453 / NBRC 100688 / NCTC 11704 / L1) (Acholeplasma florum)).